Here is a 209-residue protein sequence, read N- to C-terminus: Ribosomal RNA large subunit methyltransferase E (209 aa).

S-adenosyl-L-methionine is bound by residues Gly-63, Trp-65, Asp-83, Asp-99, and Asp-124. Residue Lys-164 is the Proton acceptor of the active site.

Belongs to the class I-like SAM-binding methyltransferase superfamily. RNA methyltransferase RlmE family.

Its subcellular location is the cytoplasm. The enzyme catalyses uridine(2552) in 23S rRNA + S-adenosyl-L-methionine = 2'-O-methyluridine(2552) in 23S rRNA + S-adenosyl-L-homocysteine + H(+). Its function is as follows. Specifically methylates the uridine in position 2552 of 23S rRNA at the 2'-O position of the ribose in the fully assembled 50S ribosomal subunit. This is Ribosomal RNA large subunit methyltransferase E from Shewanella woodyi (strain ATCC 51908 / MS32).